The sequence spans 655 residues: Macrolide export ATP-binding/permease protein MacB (655 aa).

An ABC transporter domain is found at Ile-6–Glu-244. Gly-42–Ser-49 contacts ATP. The segment at Asp-225–Pro-252 is disordered. Transmembrane regions (helical) follow at residues Leu-280 to Ala-300, Leu-527 to Met-547, Val-583 to Leu-603, and Ser-620 to Ala-640.

This sequence belongs to the ABC transporter superfamily. Macrolide exporter (TC 3.A.1.122) family. Homodimer.

It localises to the cell inner membrane. Functionally, non-canonical ABC transporter that contains transmembrane domains (TMD), which form a pore in the inner membrane, and an ATP-binding domain (NBD), which is responsible for energy generation. Confers resistance against macrolides. The protein is Macrolide export ATP-binding/permease protein MacB of Bordetella avium (strain 197N).